The following is a 445-amino-acid chain: Zinc finger protein 296 (445 aa).

Basic residues predominate over residues 1–10; it reads MSRRKAGRVP. The tract at residues 1-20 is disordered; the sequence is MSRRKAGRVPRRVDPDTDTD. A Glycyl lysine isopeptide (Lys-Gly) (interchain with G-Cter in SUMO2) cross-link involves residue K31. Residues 62 to 88 form a disordered region; sequence SRPLGAPSTCAPRMPLSSKSSDRQPWT. C2H2-type zinc fingers lie at residues 138–161, 212–234, and 240–262; these read LSCL…QWDH, PTCD…MRSH, and YSCD…KKTH. The tract at residues 256-359 is disordered; the sequence is NRHKKTHRQL…TAPRKSHGPG (104 aa). Over residues 269-278 the composition is skewed to polar residues; the sequence is SPSTSASSRG. The segment covering 320–332 has biased composition (gly residues); it reads PGSGAQGGPGFVG. A compositionally biased stretch (basic and acidic residues) spans 338 to 351; sequence KVERTDPVKIEKTA. 3 consecutive C2H2-type zinc fingers follow at residues 360–382, 388–410, and 418–441; these read GKCE…RRSH, YTCD…RRTH, and VKCP…RQKH.

This sequence belongs to the krueppel C2H2-type zinc-finger protein family. As to quaternary structure, interacts with KLF4. As to expression, strongly expressed in testis and embryonic stem cells.

Its subcellular location is the nucleus. Its function is as follows. May be a transcriptional corepressor with KLF4. In Mus musculus (Mouse), this protein is Zinc finger protein 296.